We begin with the raw amino-acid sequence, 682 residues long: Potassium-transporting ATPase ATP-binding subunit (682 aa).

A run of 5 helical transmembrane segments spans residues 15–35 (AALF…AKLA), 42–62 (SPVM…TASG), 66–86 (AGFG…GNFA), 233–253 (LTFL…GVTL), and 257–277 (LLIA…LPAI). The 4-aspartylphosphate intermediate role is filled by Asp-310. Residues Asp-347, Glu-351, 377-384 (FTAQTRMS), and Lys-395 contribute to the ATP site. 2 residues coordinate Mg(2+): Asp-518 and Asp-522. A run of 3 helical transmembrane segments spans residues 588–608 (FAIL…LNVM), 616–636 (AVLA…PLAL), and 662–682 (VLLP…VLGA).

This sequence belongs to the cation transport ATPase (P-type) (TC 3.A.3) family. Type IA subfamily. As to quaternary structure, the system is composed of three essential subunits: KdpA, KdpB and KdpC.

The protein resides in the cell inner membrane. The enzyme catalyses K(+)(out) + ATP + H2O = K(+)(in) + ADP + phosphate + H(+). In terms of biological role, part of the high-affinity ATP-driven potassium transport (or Kdp) system, which catalyzes the hydrolysis of ATP coupled with the electrogenic transport of potassium into the cytoplasm. This subunit is responsible for energy coupling to the transport system and for the release of the potassium ions to the cytoplasm. This is Potassium-transporting ATPase ATP-binding subunit from Xanthomonas axonopodis pv. citri (strain 306).